Reading from the N-terminus, the 160-residue chain is Cytochrome b6-f complex subunit 4 (160 aa).

The next 3 membrane-spanning stretches (helical) occupy residues 36-56 (LLYIFPVVILGTIACNVGLAV), 95-115 (LLGVLLMVSVPAGLLTVPFLE), and 131-151 (TVFLIGTAVALWLGIGATLPI).

The protein belongs to the cytochrome b family. PetD subfamily. In terms of assembly, the 4 large subunits of the cytochrome b6-f complex are cytochrome b6, subunit IV (17 kDa polypeptide, petD), cytochrome f and the Rieske protein, while the 4 small subunits are petG, petL, petM and petN. The complex functions as a dimer.

Its subcellular location is the plastid. The protein localises to the chloroplast thylakoid membrane. Functionally, component of the cytochrome b6-f complex, which mediates electron transfer between photosystem II (PSII) and photosystem I (PSI), cyclic electron flow around PSI, and state transitions. This chain is Cytochrome b6-f complex subunit 4, found in Morus indica (Mulberry).